The chain runs to 328 residues: Serine/threonine protein kinase RdoA (328 aa).

The Proton acceptor role is filled by D201. Positions 206 and 217 each coordinate Mg(2+). D217 is an active-site residue.

Belongs to the SrkA/RdoA protein kinase family. As to quaternary structure, monomer. It depends on Mg(2+) as a cofactor.

It localises to the cytoplasm. The enzyme catalyses L-seryl-[protein] + ATP = O-phospho-L-seryl-[protein] + ADP + H(+). It carries out the reaction L-threonyl-[protein] + ATP = O-phospho-L-threonyl-[protein] + ADP + H(+). In terms of biological role, a protein kinase that (auto)phosphorylates on Ser and Thr residues, probably involved in the extracytoplasmic stress response. Probably acts to suppress the effects of stress linked to accumulation of reactive oxygen species. The protein is Serine/threonine protein kinase RdoA of Salmonella typhimurium (strain LT2 / SGSC1412 / ATCC 700720).